We begin with the raw amino-acid sequence, 67 residues long: ATP synthase F(0) complex subunit 8 (67 aa).

A helical membrane pass occupies residues 8-24 (TWLIMILSMILTLFITF). N6-acetyllysine; alternate is present on K54. At K54 the chain carries N6-succinyllysine; alternate. N6-acetyllysine is present on K57.

The protein belongs to the ATPase protein 8 family. In terms of assembly, component of the ATP synthase complex composed at least of ATP5F1A/subunit alpha, ATP5F1B/subunit beta, ATP5MC1/subunit c (homooctomer), MT-ATP6/subunit a, MT-ATP8/subunit 8, ATP5ME/subunit e, ATP5MF/subunit f, ATP5MG/subunit g, ATP5MK/subunit k, ATP5MJ/subunit j, ATP5F1C/subunit gamma, ATP5F1D/subunit delta, ATP5F1E/subunit epsilon, ATP5PF/subunit F6, ATP5PB/subunit b, ATP5PD/subunit d, ATP5PO/subunit OSCP. ATP synthase complex consists of a soluble F(1) head domain (subunits alpha(3) and beta(3)) - the catalytic core - and a membrane F(0) domain - the membrane proton channel (subunits c, a, 8, e, f, g, k and j). These two domains are linked by a central stalk (subunits gamma, delta, and epsilon) rotating inside the F1 region and a stationary peripheral stalk (subunits F6, b, d, and OSCP). Interacts with PRICKLE3.

The protein localises to the mitochondrion membrane. In terms of biological role, subunit 8, of the mitochondrial membrane ATP synthase complex (F(1)F(0) ATP synthase or Complex V) that produces ATP from ADP in the presence of a proton gradient across the membrane which is generated by electron transport complexes of the respiratory chain. ATP synthase complex consist of a soluble F(1) head domain - the catalytic core - and a membrane F(1) domain - the membrane proton channel. These two domains are linked by a central stalk rotating inside the F(1) region and a stationary peripheral stalk. During catalysis, ATP synthesis in the catalytic domain of F(1) is coupled via a rotary mechanism of the central stalk subunits to proton translocation. In vivo, can only synthesize ATP although its ATP hydrolase activity can be activated artificially in vitro. Part of the complex F(0) domain. The protein is ATP synthase F(0) complex subunit 8 of Phoca vitulina (Harbor seal).